The primary structure comprises 435 residues: Xylose isomerase (435 aa).

Residues His-99 and Asp-102 contribute to the active site. 7 residues coordinate Mg(2+): Glu-230, Glu-266, His-269, Asp-294, Asp-305, Asp-307, and Asp-337.

The protein belongs to the xylose isomerase family. In terms of assembly, homotetramer. Mg(2+) serves as cofactor.

Its subcellular location is the cytoplasm. The catalysed reaction is alpha-D-xylose = alpha-D-xylulofuranose. The chain is Xylose isomerase from Listeria welshimeri serovar 6b (strain ATCC 35897 / DSM 20650 / CCUG 15529 / CIP 8149 / NCTC 11857 / SLCC 5334 / V8).